We begin with the raw amino-acid sequence, 450 residues long: tRNA modification GTPase MnmE (450 aa).

Residues R23, E79, and K118 each coordinate (6S)-5-formyl-5,6,7,8-tetrahydrofolate. A TrmE-type G domain is found at 214–374 (GITLILVGKP…LKEHILNKVG (161 aa)). N224 is a K(+) binding site. GTP-binding positions include 224–229 (NAGKSS), 243–249 (TSIAGTT), and 268–271 (DTAG). Residue S228 coordinates Mg(2+). 3 residues coordinate K(+): T243, I245, and T248. T249 provides a ligand contact to Mg(2+). K450 contributes to the (6S)-5-formyl-5,6,7,8-tetrahydrofolate binding site.

The protein belongs to the TRAFAC class TrmE-Era-EngA-EngB-Septin-like GTPase superfamily. TrmE GTPase family. In terms of assembly, homodimer. Heterotetramer of two MnmE and two MnmG subunits. It depends on K(+) as a cofactor.

The protein resides in the cytoplasm. Exhibits a very high intrinsic GTPase hydrolysis rate. Involved in the addition of a carboxymethylaminomethyl (cmnm) group at the wobble position (U34) of certain tRNAs, forming tRNA-cmnm(5)s(2)U34. The polypeptide is tRNA modification GTPase MnmE (Francisella tularensis subsp. novicida (strain U112)).